We begin with the raw amino-acid sequence, 188 residues long: GTPase KRas (188 aa).

GTP contacts are provided by residues 10–18 (GAGGVGKSA), 29–35 (VDEYDPT), 59–60 (AG), and 116–119 (NKCD). Residues 32-40 (YDPTIEDSY) carry the Effector region motif. The segment at 167–188 (KEKMSKEGKKKKKKSKTKCILM) is disordered. At cysteine 185 the chain carries Cysteine methyl ester. Residue cysteine 185 is the site of S-farnesyl cysteine attachment. A propeptide spans 186 to 188 (ILM) (removed in mature form).

The protein belongs to the small GTPase superfamily. Ras family.

The protein resides in the cell membrane. It is found in the cytoplasm. It catalyses the reaction GTP + H2O = GDP + phosphate + H(+). Its activity is regulated as follows. Alternates between an inactive form bound to GDP and an active form bound to GTP. Activated by a guanine nucleotide-exchange factor (GEF) and inactivated by a GTPase-activating protein (GAP). Ras proteins bind GDP/GTP and possess intrinsic GTPase activity. Plays an important role in the regulation of cell proliferation. This is GTPase KRas (kras1) from Oryzias latipes (Japanese rice fish).